The chain runs to 171 residues: Methylated-DNA--protein-cysteine methyltransferase (171 aa).

Cys-139 functions as the Nucleophile; methyl group acceptor in the catalytic mechanism.

Belongs to the MGMT family.

Its subcellular location is the cytoplasm. The enzyme catalyses a 6-O-methyl-2'-deoxyguanosine in DNA + L-cysteinyl-[protein] = S-methyl-L-cysteinyl-[protein] + a 2'-deoxyguanosine in DNA. The catalysed reaction is a 4-O-methyl-thymidine in DNA + L-cysteinyl-[protein] = a thymidine in DNA + S-methyl-L-cysteinyl-[protein]. Functionally, involved in the cellular defense against the biological effects of O6-methylguanine (O6-MeG) and O4-methylthymine (O4-MeT) in DNA. Repairs the methylated nucleobase in DNA by stoichiometrically transferring the methyl group to a cysteine residue in the enzyme. This is a suicide reaction: the enzyme is irreversibly inactivated. The chain is Methylated-DNA--protein-cysteine methyltransferase from Salmonella typhi.